The chain runs to 322 residues: F-actin-capping protein subunit beta (322 aa).

This sequence belongs to the F-actin-capping protein beta subunit family. As to quaternary structure, component of the F-actin capping complex, composed of a heterodimer of an alpha and a beta subunit.

Its subcellular location is the cytoplasm. It is found in the cytoskeleton. It localises to the actin patch. Functionally, F-actin-capping proteins bind in a Ca(2+)-independent manner to the fast growing ends of actin filaments (barbed end) thereby blocking the exchange of subunits at these ends. Unlike other capping proteins (such as gelsolin and severin), these proteins do not sever actin filaments. The polypeptide is F-actin-capping protein subunit beta (cap2) (Aspergillus fumigatus (strain ATCC MYA-4609 / CBS 101355 / FGSC A1100 / Af293) (Neosartorya fumigata)).